We begin with the raw amino-acid sequence, 380 residues long: Glycogenin-2 (380 aa).

The UDP site is built by Leu-10, Tyr-16, and Arg-95. Residues Leu-10, Tyr-16, Arg-95, Lys-104, Asp-120, Ala-121, Asp-122, Asn-158, Thr-159, Asp-185, Asp-188, and Gln-189 each coordinate UDP-alpha-D-glucose. UDP is bound by residues Asp-120, Ala-121, and Asp-122. Asp-120 is a binding site for Mn(2+). Asp-122 contacts Mn(2+). O-linked (Glc...) tyrosine glycans are attached at residues Tyr-230 and Tyr-232. His-249, Gly-252, and Lys-255 together coordinate UDP. Residue His-249 participates in Mn(2+) binding. Gly-252 and Lys-255 together coordinate UDP-alpha-D-glucose. A disordered region spans residues 331-355; it reads SVDRNASQKSTAEKHDIEKPTSKPQ. A compositionally biased stretch (basic and acidic residues) spans 341 to 351; it reads TAEKHDIEKPT. Tyr-367 is a glycosylation site (O-linked (Glc...) tyrosine).

It belongs to the glycosyltransferase 8 family. Glycogenin subfamily. Interacts with glycogen synthase GSY2. The cofactor is Mn(2+).

The protein resides in the cytoplasm. Its subcellular location is the vacuole. The catalysed reaction is L-tyrosyl-[glycogenin] + UDP-alpha-D-glucose = alpha-D-glucosyl-L-tyrosyl-[glycogenin] + UDP + H(+). It carries out the reaction [1,4-alpha-D-glucosyl](n)-L-tyrosyl-[glycogenin] + UDP-alpha-D-glucose = [1,4-alpha-D-glucosyl](n+1)-L-tyrosyl-[glycogenin] + UDP + H(+). Its function is as follows. Self-glucosylating initiator of glycogen synthesis. It catalyzes the formation of a short alpha (1,4)-glucosyl chain covalently attached via a glucose 1-O-tyrosyl linkage to internal tyrosine residues and these chains act as primers for the elongation reaction catalyzed by glycogen synthase. Capable of transferring glucosyl residues to unbound acceptors such as free oligoglucans or oligoglucan derivatives. The sequence is that of Glycogenin-2 from Saccharomyces cerevisiae (strain ATCC 204508 / S288c) (Baker's yeast).